The primary structure comprises 158 residues: MICENVETFAEALPRTGAVAGLDLGTKTIGVAVSDGLRGVASPLTVIRRTKFTADAQALLKIVQDRALVGLVLGLPRNMDGSEGPRAQSTRAFARNLERLTPLPITFWDERLSTVAAERALLEGDTSRKRRAEVIDQVAAGYILQGALDRLRFLGRTE.

This sequence belongs to the YqgF nuclease family.

The protein localises to the cytoplasm. Functionally, could be a nuclease involved in processing of the 5'-end of pre-16S rRNA. This is Putative pre-16S rRNA nuclease from Paracoccus denitrificans (strain Pd 1222).